Reading from the N-terminus, the 319-residue chain is Olfactory receptor 51F1 (319 aa).

Residues 1–37 are Extracellular-facing; sequence MLQNQDTMEILSNSTSKFPTFLLTGIPGLESAHVWIS. The helical transmembrane segment at 38–58 threads the bilayer; it reads IPFCCFYAIALSGNSVILFVI. Topologically, residues 59 to 75 are cytoplasmic; sequence ITQQSLHEPMYYFLFRL. A helical transmembrane segment spans residues 76 to 96; sequence SATDLGLTVSSLSTTLGILWF. Residues 97 to 106 are Extracellular-facing; sequence EAREISLYSC. Residues cysteine 106 and cysteine 188 are joined by a disulfide bond. The helical transmembrane segment at 107-127 threads the bilayer; it reads IVQMFFLHGFTFMESGVLVAT. The Cytoplasmic portion of the chain corresponds to 128–149; sequence AFDRYVAICDPLRYTTILTNSR. The helical transmembrane segment at 150–170 threads the bilayer; sequence IIQMGLLMITRAIVLILPLLL. The Extracellular portion of the chain corresponds to 171–211; it reads LLKPLYFCRMNALSHSYCYHPDVIQLACSDIRANSICGLID. A helical membrane pass occupies residues 212 to 232; the sequence is LILTTGIDTPCIVLSYILIIH. The Cytoplasmic portion of the chain corresponds to 233–249; the sequence is SVLRIASPEEWHKVFST. A helical transmembrane segment spans residues 250–270; that stretch reads CVSHVGAVAFFYIHMLSLSLV. Residues 271–279 are Extracellular-facing; that stretch reads YRYGRSAPR. A helical transmembrane segment spans residues 280–300; the sequence is VVHSVMANVYLLLPPVLNPII. Over 301–319 the chain is Cytoplasmic; that stretch reads DSVKTKQIRKAMLSLLLTK.

It belongs to the G-protein coupled receptor 1 family.

The protein resides in the cell membrane. Odorant receptor. This Homo sapiens (Human) protein is Olfactory receptor 51F1 (OR51F1).